The sequence spans 406 residues: Bifunctional enzyme Fae/Hps (406 aa).

The formaldehyde-activating enzyme stretch occupies residues 1-164 (MSDIYEIGEA…AEKDRGTHPI (164 aa)). The Proton donor role is filled by His-20. Positions 22, 51, 69, 71, and 86 each coordinate substrate. The 3-hexulose-6-phosphate synthase stretch occupies residues 165-406 (MGFKAMKLWN…RLALDEDEKI (242 aa)).

In the N-terminal section; belongs to the formaldehyde-activating enzyme family. It in the C-terminal section; belongs to the HPS/KGPDC family. HPS subfamily.

The enzyme catalyses 5,6,7,8-tetrahydromethanopterin + formaldehyde = 5,10-methylenetetrahydromethanopterin + H2O. The catalysed reaction is D-ribulose 5-phosphate + formaldehyde = D-arabino-hex-3-ulose 6-phosphate. The protein operates within carbohydrate biosynthesis; D-ribose 5-phosphate biosynthesis. Functionally, catalyzes the condensation of formaldehyde with tetrahydromethanopterin (H(4)MPT) to 5,10-methylenetetrahydromethanopterin. Catalyzes the reversible formation of ribulose-5-phosphate and formaldehyde from 3-hexulose-6-phosphate. This Methanosphaera stadtmanae (strain ATCC 43021 / DSM 3091 / JCM 11832 / MCB-3) protein is Bifunctional enzyme Fae/Hps.